We begin with the raw amino-acid sequence, 332 residues long: MDTRSEVLLRQAELFQGSLLLAGLAADDLLGRLPNARGWSWHAGDQAALEARFPGRSHFGVDAPAQSFDSAVLFLPKSKDLTDYLLNALASRLAGRELYLVGEKRSGVESAAKQLNPFGKPRKLDSARHCQLWQVTVANAPEPLTLQSLAQEYELPLAEGPLKVISLPGVFSHGRLDRGTALLLEHLDHLPAGHLLDFGCGAGVLGATVKRRYPDSRVTLLDVDAFAAASSRLTLAANGLEAEVLTGDGIDAAPMGLNGILTNPPFHTGVHTDYQATENLLRKAAKHLQKGGELRVVANSFLRYQPLIEEHLGPCAIKAEGQGFRIYRAKRG.

It belongs to the methyltransferase superfamily. RsmC family. Monomer.

The protein resides in the cytoplasm. The catalysed reaction is guanosine(1207) in 16S rRNA + S-adenosyl-L-methionine = N(2)-methylguanosine(1207) in 16S rRNA + S-adenosyl-L-homocysteine + H(+). In terms of biological role, specifically methylates the guanine in position 1207 of 16S rRNA in the 30S particle. In Pseudomonas fluorescens (strain ATCC BAA-477 / NRRL B-23932 / Pf-5), this protein is Ribosomal RNA small subunit methyltransferase C.